Reading from the N-terminus, the 77-residue chain is Acyl carrier protein (77 aa).

The 76-residue stretch at 2–77 (STIEERVKKV…EAIDYVVAHQ (76 aa)) folds into the Carrier domain. The residue at position 37 (serine 37) is an O-(pantetheine 4'-phosphoryl)serine.

It belongs to the acyl carrier protein (ACP) family. In terms of processing, 4'-phosphopantetheine is transferred from CoA to a specific serine of apo-ACP by AcpS. This modification is essential for activity because fatty acids are bound in thioester linkage to the sulfhydryl of the prosthetic group.

The protein localises to the cytoplasm. It participates in lipid metabolism; fatty acid biosynthesis. Its function is as follows. Carrier of the growing fatty acid chain in fatty acid biosynthesis. The protein is Acyl carrier protein of Chromohalobacter salexigens (strain ATCC BAA-138 / DSM 3043 / CIP 106854 / NCIMB 13768 / 1H11).